The sequence spans 129 residues: Protein UL131A (129 aa).

A signal peptide spans 1–18 (MRLCRVWLSVCLCAVVLG).

As to quaternary structure, forms the envelope pentamer complex (PC) composed of gH, gL, UL128, UL130, and UL131A. The pentamer interacts with host NRP2. The interaction with gH is important for the formation of UL128, UL130, gH-gL complex.

The protein resides in the virion membrane. Plays a role in viral entry into host cells. Forms a pentameric complex at the surface of the viral envelope together with gH, gL, UL130 and UL131. This complex is required for entry in epithelial, endothelial and myeloid host cells. Mechanistically, engages host receptor(s) including neurophilin 2/NRP2 to mediate infection. Contributes to the formation of the complex between UL128, UL130 and gH-gL. This Human cytomegalovirus (strain Merlin) (HHV-5) protein is Protein UL131A (UL131A).